Here is a 171-residue protein sequence, read N- to C-terminus: Ponticulin-like protein F (171 aa).

The signal sequence occupies residues 1–20; that stretch reads MKFIPALIIFVFTIFALTNS. Glycine 149 carries GPI-like-anchor amidated glycine lipidation. A propeptide spans 150–171 (removed in mature form); that stretch reads TSSTIVIPFALILSLLLSVITL.

This sequence belongs to the ponticulin family. In terms of processing, the GPI-like-anchor contains a phosphoceramide group, rather than a phosphatidyl group.

It is found in the cell membrane. The sequence is that of Ponticulin-like protein F (ponF) from Dictyostelium discoideum (Social amoeba).